The primary structure comprises 85 residues: Inhibitor of dGTPase (85 aa).

As to quaternary structure, interacts with host dGTPase/dgt.

Functionally, plays a role in increasing the intracellular pool of dGTP. Interacts with and inhibits host dGTPase/dgt. The complex made of the host dGTPase and gene 1.2 protein creates a GTP-binding site of high affinity. Subsequent binding of GTP to the enzyme-inhibitor complex inhibits its dissociation. The sequence is that of Inhibitor of dGTPase from Escherichia coli (Bacteriophage T7).